Consider the following 418-residue polypeptide: Glutamyl-tRNA reductase (418 aa).

Residues 49-52, Ser-109, 114-116, and Gln-120 contribute to the substrate site; these read TCNR and EPQ. Residue Cys-50 is the Nucleophile of the active site. 189–194 contacts NADP(+); that stretch reads GAGETI.

Belongs to the glutamyl-tRNA reductase family. In terms of assembly, homodimer.

The catalysed reaction is (S)-4-amino-5-oxopentanoate + tRNA(Glu) + NADP(+) = L-glutamyl-tRNA(Glu) + NADPH + H(+). It functions in the pathway porphyrin-containing compound metabolism; protoporphyrin-IX biosynthesis; 5-aminolevulinate from L-glutamyl-tRNA(Glu): step 1/2. In terms of biological role, catalyzes the NADPH-dependent reduction of glutamyl-tRNA(Glu) to glutamate 1-semialdehyde (GSA). This is Glutamyl-tRNA reductase from Escherichia coli O7:K1 (strain IAI39 / ExPEC).